A 165-amino-acid polypeptide reads, in one-letter code: Large ribosomal subunit protein uL10 (165 aa).

Belongs to the universal ribosomal protein uL10 family. As to quaternary structure, part of the ribosomal stalk of the 50S ribosomal subunit. The N-terminus interacts with L11 and the large rRNA to form the base of the stalk. The C-terminus forms an elongated spine to which L12 dimers bind in a sequential fashion forming a multimeric L10(L12)X complex.

Forms part of the ribosomal stalk, playing a central role in the interaction of the ribosome with GTP-bound translation factors. The chain is Large ribosomal subunit protein uL10 from Pectobacterium atrosepticum (strain SCRI 1043 / ATCC BAA-672) (Erwinia carotovora subsp. atroseptica).